Consider the following 86-residue polypeptide: Mu-theraphotoxin-Hhn1d (86 aa).

The first 21 residues, 1–21, serve as a signal peptide directing secretion; sequence MKASMFLALAGLALLFVVCYA. The propeptide occupies 22–49; the sequence is SESEEKEFSNELLSSVLAVDDNSKGEER. Intrachain disulfides connect cysteine 51-cysteine 66, cysteine 58-cysteine 73, and cysteine 65-cysteine 80. Isoleucine amide is present on isoleucine 84.

The protein belongs to the neurotoxin 10 (Hwtx-1) family. 22 (Htx-4) subfamily. In terms of assembly, monomer. In terms of tissue distribution, expressed by the venom gland.

It localises to the secreted. Functionally, neurotoxin. Selectively blocks neuronal tetrodotoxin-sensitive voltage-gated sodium channels (Nav). Does not affect tetrodotoxin-resistant voltage-gated sodium channels or calcium channels. This is Mu-theraphotoxin-Hhn1d from Cyriopagopus hainanus (Chinese bird spider).